We begin with the raw amino-acid sequence, 243 residues long: tRNA pseudouridine synthase A (243 aa).

Residue Asp53 is the Nucleophile of the active site. Tyr111 serves as a coordination point for substrate.

It belongs to the tRNA pseudouridine synthase TruA family. Homodimer.

The enzyme catalyses uridine(38/39/40) in tRNA = pseudouridine(38/39/40) in tRNA. In terms of biological role, formation of pseudouridine at positions 38, 39 and 40 in the anticodon stem and loop of transfer RNAs. In Chlorobium limicola (strain DSM 245 / NBRC 103803 / 6330), this protein is tRNA pseudouridine synthase A.